The primary structure comprises 930 residues: Isoleucine--tRNA ligase (930 aa).

Residues 57–67 carry the 'HIGH' region motif; sequence PYANGNIHVGH. Residue Glu554 coordinates L-isoleucyl-5'-AMP. A 'KMSKS' region motif is present at residues 595–599; sequence KMSKS. Lys598 serves as a coordination point for ATP. Cys888, Cys891, Cys908, and Cys911 together coordinate Zn(2+).

Belongs to the class-I aminoacyl-tRNA synthetase family. IleS type 1 subfamily. Monomer. Zn(2+) is required as a cofactor.

The protein resides in the cytoplasm. The enzyme catalyses tRNA(Ile) + L-isoleucine + ATP = L-isoleucyl-tRNA(Ile) + AMP + diphosphate. Its function is as follows. Catalyzes the attachment of isoleucine to tRNA(Ile). As IleRS can inadvertently accommodate and process structurally similar amino acids such as valine, to avoid such errors it has two additional distinct tRNA(Ile)-dependent editing activities. One activity is designated as 'pretransfer' editing and involves the hydrolysis of activated Val-AMP. The other activity is designated 'posttransfer' editing and involves deacylation of mischarged Val-tRNA(Ile). This Streptococcus pneumoniae serotype 4 (strain ATCC BAA-334 / TIGR4) protein is Isoleucine--tRNA ligase.